Consider the following 314-residue polypeptide: tRNA dimethylallyltransferase (314 aa).

8–15 (GPTGAGKS) contacts ATP. 10–15 (TGAGKS) is a substrate binding site.

Belongs to the IPP transferase family. As to quaternary structure, monomer. Mg(2+) is required as a cofactor.

The enzyme catalyses adenosine(37) in tRNA + dimethylallyl diphosphate = N(6)-dimethylallyladenosine(37) in tRNA + diphosphate. Functionally, catalyzes the transfer of a dimethylallyl group onto the adenine at position 37 in tRNAs that read codons beginning with uridine, leading to the formation of N6-(dimethylallyl)adenosine (i(6)A). This chain is tRNA dimethylallyltransferase, found in Mycobacterium tuberculosis (strain ATCC 25177 / H37Ra).